Here is a 199-residue protein sequence, read N- to C-terminus: dITP/XTP pyrophosphatase (199 aa).

12 to 17 contacts substrate; sequence SGNAGK. The active-site Proton acceptor is Asp73. Asp73 contacts Mg(2+). Substrate is bound by residues Ser74, 157-160, Lys180, and 185-186; these read FGYD and HR.

Belongs to the HAM1 NTPase family. As to quaternary structure, homodimer. Requires Mg(2+) as cofactor.

The catalysed reaction is XTP + H2O = XMP + diphosphate + H(+). It catalyses the reaction dITP + H2O = dIMP + diphosphate + H(+). The enzyme catalyses ITP + H2O = IMP + diphosphate + H(+). In terms of biological role, pyrophosphatase that catalyzes the hydrolysis of nucleoside triphosphates to their monophosphate derivatives, with a high preference for the non-canonical purine nucleotides XTP (xanthosine triphosphate), dITP (deoxyinosine triphosphate) and ITP. Seems to function as a house-cleaning enzyme that removes non-canonical purine nucleotides from the nucleotide pool, thus preventing their incorporation into DNA/RNA and avoiding chromosomal lesions. In Neisseria meningitidis serogroup B (strain ATCC BAA-335 / MC58), this protein is dITP/XTP pyrophosphatase.